Here is a 239-residue protein sequence, read N- to C-terminus: Sugar fermentation stimulation protein homolog (239 aa).

It belongs to the SfsA family.

The chain is Sugar fermentation stimulation protein homolog from Desulforamulus reducens (strain ATCC BAA-1160 / DSM 100696 / MI-1) (Desulfotomaculum reducens).